The following is a 304-amino-acid chain: Non-specific ribonucleoside hydrolase RihC (304 aa).

Residue His-233 is part of the active site.

This sequence belongs to the IUNH family. RihC subfamily.

Hydrolyzes both purine and pyrimidine ribonucleosides with a broad-substrate specificity. This Shigella boydii serotype 18 (strain CDC 3083-94 / BS512) protein is Non-specific ribonucleoside hydrolase RihC.